The chain runs to 396 residues: Probable tRNA sulfurtransferase (396 aa).

In terms of domain architecture, THUMP spans 58–169; the sequence is NQFIEKLKMV…KKNIYVFTRS (112 aa). ATP contacts are provided by residues 187 to 188, 212 to 213, R269, G291, and Q300; these read LL and YF.

This sequence belongs to the ThiI family.

The protein localises to the cytoplasm. It catalyses the reaction [ThiI sulfur-carrier protein]-S-sulfanyl-L-cysteine + a uridine in tRNA + 2 reduced [2Fe-2S]-[ferredoxin] + ATP + H(+) = [ThiI sulfur-carrier protein]-L-cysteine + a 4-thiouridine in tRNA + 2 oxidized [2Fe-2S]-[ferredoxin] + AMP + diphosphate. The catalysed reaction is [ThiS sulfur-carrier protein]-C-terminal Gly-Gly-AMP + S-sulfanyl-L-cysteinyl-[cysteine desulfurase] + AH2 = [ThiS sulfur-carrier protein]-C-terminal-Gly-aminoethanethioate + L-cysteinyl-[cysteine desulfurase] + A + AMP + 2 H(+). The protein operates within cofactor biosynthesis; thiamine diphosphate biosynthesis. Functionally, catalyzes the ATP-dependent transfer of a sulfur to tRNA to produce 4-thiouridine in position 8 of tRNAs, which functions as a near-UV photosensor. Also catalyzes the transfer of sulfur to the sulfur carrier protein ThiS, forming ThiS-thiocarboxylate. This is a step in the synthesis of thiazole, in the thiamine biosynthesis pathway. The sulfur is donated as persulfide by IscS. The chain is Probable tRNA sulfurtransferase from Halothermothrix orenii (strain H 168 / OCM 544 / DSM 9562).